Consider the following 395-residue polypeptide: Subtilisin-like protease 9 (395 aa).

The signal sequence occupies residues Met-1–Thr-20. Residues Ser-21–Leu-120 constitute a propeptide that is removed on maturation. Positions Ser-36–Met-117 constitute an Inhibitor I9 domain. One can recognise a Peptidase S8 domain in the interval Ser-128–Ala-395. Residues Asp-160 and His-191 each act as charge relay system in the active site. N-linked (GlcNAc...) asparagine glycosylation is present at Asn-252. Catalysis depends on Ser-341, which acts as the Charge relay system. A glycan (N-linked (GlcNAc...) asparagine) is linked at Asn-391.

It belongs to the peptidase S8 family.

It is found in the secreted. Secreted subtilisin-like serine protease with keratinolytic activity that contributes to pathogenicity. The sequence is that of Subtilisin-like protease 9 (SUB9) from Arthroderma otae (strain ATCC MYA-4605 / CBS 113480) (Microsporum canis).